The primary structure comprises 124 residues: Glycine cleavage system H protein (124 aa).

The Lipoyl-binding domain occupies 22–103 (VFVVGITDNA…AYTAWIFKIK (82 aa)). An N6-lipoyllysine modification is found at Lys63.

This sequence belongs to the GcvH family. The glycine cleavage system is composed of four proteins: P, T, L and H. It depends on (R)-lipoate as a cofactor.

The glycine cleavage system catalyzes the degradation of glycine. The H protein shuttles the methylamine group of glycine from the P protein to the T protein. In Bordetella pertussis (strain Tohama I / ATCC BAA-589 / NCTC 13251), this protein is Glycine cleavage system H protein.